A 106-amino-acid polypeptide reads, in one-letter code: UPF0060 membrane protein RHE_CH01408 (106 aa).

The next 4 helical transmembrane spans lie at isoleucine 4–leucine 24, alanine 30–valine 50, phenylalanine 59–glycine 79, and aspartate 86–alanine 106.

Belongs to the UPF0060 family.

The protein localises to the cell inner membrane. In Rhizobium etli (strain ATCC 51251 / DSM 11541 / JCM 21823 / NBRC 15573 / CFN 42), this protein is UPF0060 membrane protein RHE_CH01408.